Here is a 154-residue protein sequence, read N- to C-terminus: Myoglobin (154 aa).

In terms of domain architecture, Globin spans Gly-2 to Lys-148. A nitrite-binding site is contributed by His-65. Position 65 (His-65) interacts with O2. Position 94 (His-94) interacts with heme b.

The protein belongs to the globin family. Monomeric.

Its subcellular location is the cytoplasm. The protein localises to the sarcoplasm. It carries out the reaction Fe(III)-heme b-[protein] + nitric oxide + H2O = Fe(II)-heme b-[protein] + nitrite + 2 H(+). The catalysed reaction is H2O2 + AH2 = A + 2 H2O. Its function is as follows. Monomeric heme protein which primary function is to store oxygen and facilitate its diffusion within muscle tissues. Reversibly binds oxygen through a pentacoordinated heme iron and enables its timely and efficient release as needed during periods of heightened demand. Depending on the oxidative conditions of tissues and cells, and in addition to its ability to bind oxygen, it also has a nitrite reductase activity whereby it regulates the production of bioactive nitric oxide. Under stress conditions, like hypoxia and anoxia, it also protects cells against reactive oxygen species thanks to its pseudoperoxidase activity. This Chelonia mydas (Green sea-turtle) protein is Myoglobin (MB).